The chain runs to 368 residues: Methionine import ATP-binding protein MetN (368 aa).

The ABC transporter domain occupies 5–260 (IELNNLSVQF…PKEALTKQFI (256 aa)). 41–48 (GYSGAGKS) is an ATP binding site.

This sequence belongs to the ABC transporter superfamily. Methionine importer (TC 3.A.1.24) family. The complex is composed of two ATP-binding proteins (MetN), two transmembrane proteins (MetI) and a solute-binding protein (MetQ).

It localises to the cell membrane. The catalysed reaction is L-methionine(out) + ATP + H2O = L-methionine(in) + ADP + phosphate + H(+). It carries out the reaction D-methionine(out) + ATP + H2O = D-methionine(in) + ADP + phosphate + H(+). In terms of biological role, part of the ABC transporter complex MetNIQ involved in methionine import. Responsible for energy coupling to the transport system. The sequence is that of Methionine import ATP-binding protein MetN from Lactococcus lactis subsp. cremoris (strain SK11).